Here is a 328-residue protein sequence, read N- to C-terminus: DNA-directed RNA polymerase subunit alpha (328 aa).

Positions 1 to 234 are alpha N-terminal domain (alpha-NTD); the sequence is MQTAVNEFLT…QQLAVFVDLE (234 aa). The tract at residues 248-328 is alpha C-terminal domain (alpha-CTD); the sequence is IDPILLRPVD…NWPPASLKND (81 aa).

Belongs to the RNA polymerase alpha chain family. Homodimer. The RNAP catalytic core consists of 2 alpha, 1 beta, 1 beta' and 1 omega subunit. When a sigma factor is associated with the core the holoenzyme is formed, which can initiate transcription.

It carries out the reaction RNA(n) + a ribonucleoside 5'-triphosphate = RNA(n+1) + diphosphate. Functionally, DNA-dependent RNA polymerase catalyzes the transcription of DNA into RNA using the four ribonucleoside triphosphates as substrates. In Cellvibrio japonicus (strain Ueda107) (Pseudomonas fluorescens subsp. cellulosa), this protein is DNA-directed RNA polymerase subunit alpha.